We begin with the raw amino-acid sequence, 639 residues long: Polyphenol oxidase, chloroplastic (639 aa).

A chloroplast-targeting transit peptide spans methionine 1–alanine 101. The disordered stretch occupies residues glycine 35 to glutamine 58. 2 disulfide bridges follow: cysteine 111–cysteine 127 and cysteine 126–cysteine 194. Cu cation is bound by residues histidine 193, histidine 214, histidine 223, histidine 354, histidine 358, and histidine 388. A cross-link (2'-(S-cysteinyl)-histidine (Cys-His)) is located at residues cysteine 197–histidine 214.

Belongs to the tyrosinase family. Cu(2+) serves as cofactor.

It localises to the plastid. Its subcellular location is the chloroplast thylakoid lumen. It catalyses the reaction 2 catechol + O2 = 2 1,2-benzoquinone + 2 H2O. Catalyzes the oxidation of mono- and o-diphenols to o-diquinones. The sequence is that of Polyphenol oxidase, chloroplastic from Spinacia oleracea (Spinach).